The sequence spans 368 residues: Transmembrane protein 26 (368 aa).

A run of 3 helical transmembrane segments spans residues 4–24 (LVFL…LVGV), 36–56 (YWLL…TLKF), and 65–85 (FSPA…LLEL). N-linked (GlcNAc...) asparagine glycosylation occurs at asparagine 110. Helical transmembrane passes span 150-170 (QTFL…GGIT), 177-197 (LLLM…ETLE), 208-228 (VYAI…DLAV), 257-277 (IGIS…ILMT), and 281-301 (VINQ…VLQL). A disordered region spans residues 324–368 (GEHGCRAQTSESGPSQRDWQNESKEGLAIPLRGSPVTSDDSHHTP). Polar residues predominate over residues 330–341 (AQTSESGPSQRD).

It localises to the membrane. This is Transmembrane protein 26 (TMEM26) from Homo sapiens (Human).